Consider the following 218-residue polypeptide: Adenylate kinase (218 aa).

10-15 contributes to the ATP binding site; it reads GVGKGT. The segment at 30 to 59 is NMP; the sequence is STGDMLRSAIKQGTELGLKAKSFIDKGELV. Residues Thr31, Arg36, 57–59, 86–89, and Gln93 each bind AMP; these read ELV and GFPR. The LID stretch occupies residues 127-164; sequence GRRIAPSTGKVYHVVYNPPKVEGKCDETGEDLIIREDD. ATP contacts are provided by residues Arg128 and 137-138; that span reads VY. Positions 161 and 172 each coordinate AMP. Gln200 contributes to the ATP binding site.

This sequence belongs to the adenylate kinase family. As to quaternary structure, monomer.

It is found in the cytoplasm. The catalysed reaction is AMP + ATP = 2 ADP. It participates in purine metabolism; AMP biosynthesis via salvage pathway; AMP from ADP: step 1/1. Catalyzes the reversible transfer of the terminal phosphate group between ATP and AMP. Plays an important role in cellular energy homeostasis and in adenine nucleotide metabolism. The sequence is that of Adenylate kinase from Chloroherpeton thalassium (strain ATCC 35110 / GB-78).